A 341-amino-acid chain; its full sequence is L-amino acid-D/L-Glu epimerase (341 aa).

Residues T132 and 157–159 (KIK) contribute to the substrate site. The Mg(2+) site is built by D186, E212, and D237. Residues K261 and 315–317 (DLD) contribute to the substrate site.

It belongs to the mandelate racemase/muconate lactonizing enzyme family. The cofactor is Mg(2+).

Its function is as follows. Catalyzes the epimerization of dipeptides with L-Glu in the second position. Has epimerase activity with L-Gly-L-Glu, L-Ala-L-Glu, L-Ser-L-Glu, L-Pro-L-Glu, L-Val-L-Glu, L-Met-L-Glu, L-Thr-L-Glu and L-Phe-L-Glu (in vitro). The protein is L-amino acid-D/L-Glu epimerase of Sulfurimonas denitrificans (strain ATCC 33889 / DSM 1251) (Thiomicrospira denitrificans (strain ATCC 33889 / DSM 1251)).